Reading from the N-terminus, the 359-residue chain is Peptide chain release factor 1 (359 aa).

The residue at position 235 (glutamine 235) is an N5-methylglutamine. The segment at 280-306 (AERQRADSERSADRKSQVGSGDRSERI) is disordered.

It belongs to the prokaryotic/mitochondrial release factor family. Post-translationally, methylated by PrmC. Methylation increases the termination efficiency of RF1.

Its subcellular location is the cytoplasm. Its function is as follows. Peptide chain release factor 1 directs the termination of translation in response to the peptide chain termination codons UAG and UAA. This Rhizobium johnstonii (strain DSM 114642 / LMG 32736 / 3841) (Rhizobium leguminosarum bv. viciae) protein is Peptide chain release factor 1.